Here is a 453-residue protein sequence, read N- to C-terminus: Probable glucan endo-1,3-beta-glucosidase eglC (453 aa).

Residues M1–A18 form the signal peptide. The active-site Proton donor is the E128. N183 is a glycosylation site (N-linked (GlcNAc...) asparagine). E239 (nucleophile) is an active-site residue. N-linked (GlcNAc...) asparagine glycosylation is found at N364, N368, and N376. The span at T370–P380 shows a compositional bias: polar residues. The disordered stretch occupies residues T370 to S423. Composition is skewed to low complexity over residues S389–S402 and S410–S423. Residue N430 is the site of GPI-anchor amidated asparagine attachment. A propeptide spans S431–L453 (removed in mature form).

The protein belongs to the glycosyl hydrolase 17 family. Post-translationally, the GPI-anchor is attached to the protein in the endoplasmic reticulum and serves to target the protein to the cell surface. There, the glucosamine-inositol phospholipid moiety is cleaved off and the GPI-modified mannoprotein is covalently attached via its lipidless GPI glycan remnant to the 1,6-beta-glucan of the outer cell wall layer.

Its subcellular location is the cell membrane. The protein resides in the secreted. The protein localises to the cell wall. The catalysed reaction is Hydrolysis of (1-&gt;3)-beta-D-glucosidic linkages in (1-&gt;3)-beta-D-glucans.. Its function is as follows. Glucanases play a role in cell expansion during growth, in cell-cell fusion during mating, and in spore release during sporulation. This enzyme may be involved in beta-glucan degradation and also function biosynthetically as a transglycosylase. The protein is Probable glucan endo-1,3-beta-glucosidase eglC (eglC) of Aspergillus clavatus (strain ATCC 1007 / CBS 513.65 / DSM 816 / NCTC 3887 / NRRL 1 / QM 1276 / 107).